Here is a 1115-residue protein sequence, read N- to C-terminus: Neural cell adhesion molecule 1 (1115 aa).

Residues 1–19 (MLRTKDLIWTLFFLGTAVS) form the signal peptide. Ig-like C2-type domains lie at 20–111 (LQVD…ATVN), 116–205 (QKLM…KDIQ), 212–302 (PTVQ…ASIH), 309–402 (PKIT…MYLE), and 407–492 (PKLQ…ESLE). Residues 20–711 (LQVDIVPSQG…NGSPTAGLST (692 aa)) are Extracellular-facing. Intrachain disulfides connect Cys41-Cys96 and Cys139-Cys189. Heparin-binding positions include 152-156 (KHKGR) and 161-165 (KKDVR). Residue Asn222 is glycosylated (N-linked (GlcNAc...) asparagine; partial). Cys235 and Cys288 are disulfide-bonded. N-linked (GlcNAc...) asparagine glycosylation is found at Asn316, Asn348, Asn424, Asn450, and Asn479. An intrachain disulfide couples Cys330 to Cys386. A disulfide bond links Cys427 and Cys480. Fibronectin type-III domains are found at residues 500 to 599 (TPSS…TQPV) and 601 to 696 (EPSA…SAQP). Thr706 is lipidated: GPI-anchor amidated serine. The helical transmembrane segment at 712–729 (GAIVGILIVIFVLLLVVM) threads the bilayer. At 730 to 1115 (DITCYFLNKC…TQTKENESKA (386 aa)) the chain is on the cytoplasmic side. 3 disordered regions span residues 756 to 809 (GAKG…TEPE), 839 to 912 (FATA…SASN), and 924 to 1115 (VLSP…ESKA). Over residues 758 to 799 (KGKDMEEGKAAFSKDESKEPIVEVRTEEERTPNHDGGKHTEP) the composition is skewed to basic and acidic residues. A phosphoserine mark is found at Ser770 and Ser774. Composition is skewed to low complexity over residues 800–809 (NETTPLTEPE), 845–856 (SPTSETTTLTSS), and 876–896 (TPSK…KVAP). Phosphoserine is present on residues Ser887 and Ser890. Polar residues-rich tracts occupy residues 902–912 (DTPTSAPSASN) and 926–935 (SPSTPASAGE). Ser926 is subject to Phosphoserine. Thr929 carries the post-translational modification Phosphothreonine. Composition is skewed to low complexity over residues 936 to 974 (TSKA…PQAK) and 999 to 1012 (AATA…KAAT). A phosphoserine mark is found at Ser946 and Ser958. Residue Thr1001 is modified to Phosphothreonine. Position 1005 is a phosphoserine (Ser1005). Composition is skewed to basic and acidic residues over residues 1019-1037 (EDLK…DLAK) and 1074-1091 (KTEK…ESEA). Thr1030 is subject to Phosphothreonine.

Interacts with MDK. Found in a complex with SLC39A6, SLC39A10 and with NCAM1; this complex controls NCAM1 phosphorylation and integration into focal adhesion complexes during epithelial-tomesenchymal transition. Interacts with synaptic plasticity regulator PANTS. Post-translationally, polysialylated by ST8SIA2 and ST8SIA4. Polysialylation modulates cell interactions by confering both attractive and repulsive properties that are highly regulated by ST8SIA2 and ST8SIA4. Polysialylation is formed on a-2,3-linked sialic acid of core glycans.

The protein localises to the cell membrane. Its function is as follows. This protein is a cell adhesion molecule involved in neuron-neuron adhesion, neurite fasciculation, outgrowth of neurites, etc. The polypeptide is Neural cell adhesion molecule 1 (Mus musculus (Mouse)).